Consider the following 628-residue polypeptide: tRNA uridine 5-carboxymethylaminomethyl modification enzyme MnmG (628 aa).

Residue 13 to 18 (GAGHAG) coordinates FAD. 273–287 (GPRYCPSIEDKIVRF) contacts NAD(+).

Belongs to the MnmG family. As to quaternary structure, homodimer. Heterotetramer of two MnmE and two MnmG subunits. FAD serves as cofactor.

Its subcellular location is the cytoplasm. NAD-binding protein involved in the addition of a carboxymethylaminomethyl (cmnm) group at the wobble position (U34) of certain tRNAs, forming tRNA-cmnm(5)s(2)U34. The sequence is that of tRNA uridine 5-carboxymethylaminomethyl modification enzyme MnmG from Buchnera aphidicola subsp. Acyrthosiphon pisum (strain APS) (Acyrthosiphon pisum symbiotic bacterium).